The sequence spans 229 residues: Claudin-25 (229 aa).

At 1–10 (MAWSFRAKVQ) the chain is on the cytoplasmic side. Residues 11–31 (LGGLLLSLLGWVCSCVTTILP) form a helical membrane-spanning segment. Residues 32–81 (QWKTLNLELNEMETWIMGIWEVCVDREEVATVCKAFESFLSLPQELQVAR) are Extracellular-facing. Residues 82–102 (ILMVASHGLGLLGLLLCSFGS) form a helical membrane-spanning segment. The Cytoplasmic portion of the chain corresponds to 103–124 (ECFQFHRIRWVFKRRLGLLGRT). The helical transmembrane segment at 125-145 (LEASASATTLLPVSWVAHATI) threads the bilayer. Residues 146–164 (QDFWDDSIPDIIPRWEFGG) are Extracellular-facing. The helical transmembrane segment at 165-185 (ALYLGWAAGIFLALGGLLLIF) threads the bilayer. Residues 186-229 (SACLGKEDVPFPLMAGPTVPLSCAPVEESDGSFHLMLRPRNLVI) are Cytoplasmic-facing.

It belongs to the claudin family.

Its subcellular location is the cell junction. The protein resides in the tight junction. It is found in the cell membrane. Plays a major role in tight junction-specific obliteration of the intercellular space, through calcium-independent cell-adhesion activity. This chain is Claudin-25 (CLDN25), found in Homo sapiens (Human).